A 175-amino-acid polypeptide reads, in one-letter code: Secretion monitor (175 aa).

Positions 1–38 (MSIINFWRQFGRRYFWSHLLLGMVAAGIGMPSLVSAHA) are cleaved as a signal peptide.

Belongs to the SecM family.

It localises to the cytoplasm. The protein localises to the cytosol. The protein resides in the periplasm. Its function is as follows. Regulates secA expression by translational coupling of the secM secA operon. Translational pausing at a specific Pro residue 5 residues before the end of the protein may allow disruption of a mRNA repressor helix that normally suppresses secA translation initiation. This chain is Secretion monitor, found in Proteus mirabilis (strain HI4320).